Consider the following 290-residue polypeptide: Secreted chorismate mutase (290 aa).

Residues 1–21 form the signal peptide; sequence MKLSVSIFVLLAVSAFGGGSA. The segment at 117–140 is KWL1-binding extensive loop region (ELR); sequence VVLSRDTVLDKPVVGKGIFPIGRR. Residues asparagine 159 and asparagine 208 are each glycosylated (N-linked (GlcNAc...) asparagine).

Homodimer. Forms a heterodimer with the host cytosolic chorismate mutase CM2. Interacts with the host kiwellin KWL1 which acts as a defense protein that protects maize from infection.

The protein resides in the secreted. It is found in the host cytoplasm. It localises to the host cytosol. It catalyses the reaction chorismate = prephenate. Its activity is regulated as follows. Contrary to classical chorismate mutases, CMU1 is not subject to allosteric regulation by tryptophan and tyrosine. Activity is decreased in a non-competitive and allosteric manner by the binding of the host defense kiwellin KWL1 which probably blocks substrate access to the active site of CMU1. Secreted chorismate mutase that is one component of a cocktail of effectors shaping the host metabolome and acting as virulence factors. The enzyme is taken up by plant cells, can spread to neighboring cells where it affects the biosynthesis of the plant immune signal salicylic acid by channelling chorismate into the phenylpropanoid pathway. Interferes with the activity of host cytosolic chorismate mutase CM2 through heterodimerization. This Mycosarcoma maydis (Corn smut fungus) protein is Secreted chorismate mutase (CMU1).